Consider the following 431-residue polypeptide: Enolase (431 aa).

Gln167 contributes to the (2R)-2-phosphoglycerate binding site. Glu209 (proton donor) is an active-site residue. The Mg(2+) site is built by Asp246, Glu289, and Asp316. Residues Lys341, Arg370, Ser371, and Lys392 each coordinate (2R)-2-phosphoglycerate. Residue Lys341 is the Proton acceptor of the active site.

This sequence belongs to the enolase family. In terms of assembly, component of the RNA degradosome, a multiprotein complex involved in RNA processing and mRNA degradation. It depends on Mg(2+) as a cofactor.

The protein localises to the cytoplasm. It localises to the secreted. The protein resides in the cell surface. It carries out the reaction (2R)-2-phosphoglycerate = phosphoenolpyruvate + H2O. Its pathway is carbohydrate degradation; glycolysis; pyruvate from D-glyceraldehyde 3-phosphate: step 4/5. Its function is as follows. Catalyzes the reversible conversion of 2-phosphoglycerate (2-PG) into phosphoenolpyruvate (PEP). It is essential for the degradation of carbohydrates via glycolysis. The polypeptide is Enolase (Shewanella baltica (strain OS155 / ATCC BAA-1091)).